The following is a 263-amino-acid chain: Small ribosomal subunit protein eS1 (263 aa).

The segment covering 235-254 (HGEGGGGKREAGDKSERPEG) has biased composition (basic and acidic residues). The interval 235–263 (HGEGGGGKREAGDKSERPEGYEPPVQESV) is disordered.

Belongs to the eukaryotic ribosomal protein eS1 family. Component of the small ribosomal subunit. Mature ribosomes consist of a small (40S) and a large (60S) subunit. The 40S subunit contains about 33 different proteins and 1 molecule of RNA (18S). The 60S subunit contains about 49 different proteins and 3 molecules of RNA (28S, 5.8S and 5S).

The protein resides in the cytoplasm. This is Small ribosomal subunit protein eS1 from Bombyx mandarina (Wild silk moth).